A 320-amino-acid polypeptide reads, in one-letter code: Ferrochelatase (320 aa).

Fe cation contacts are provided by histidine 194 and glutamate 275.

Belongs to the ferrochelatase family. Monomer.

The protein localises to the cytoplasm. The catalysed reaction is heme b + 2 H(+) = protoporphyrin IX + Fe(2+). The protein operates within porphyrin-containing compound metabolism; protoheme biosynthesis; protoheme from protoporphyrin-IX: step 1/1. In terms of biological role, catalyzes the ferrous insertion into protoporphyrin IX. The chain is Ferrochelatase from Escherichia coli O157:H7 (strain EC4115 / EHEC).